A 332-amino-acid polypeptide reads, in one-letter code: Fructose-1,6-bisphosphatase class 1 (332 aa).

4 residues coordinate Mg(2+): E94, D116, L118, and D119. Substrate-binding positions include 119–122, N211, Y239, 257–259, and K269; these read DGSS and YLY. E275 provides a ligand contact to Mg(2+).

Belongs to the FBPase class 1 family. In terms of assembly, homotetramer. Mg(2+) serves as cofactor.

The protein resides in the cytoplasm. The catalysed reaction is beta-D-fructose 1,6-bisphosphate + H2O = beta-D-fructose 6-phosphate + phosphate. Its pathway is carbohydrate biosynthesis; Calvin cycle. The chain is Fructose-1,6-bisphosphatase class 1 from Synechococcus sp. (strain JA-3-3Ab) (Cyanobacteria bacterium Yellowstone A-Prime).